We begin with the raw amino-acid sequence, 452 residues long: Tubulin gamma chain (452 aa).

142–148 contacts GTP; that stretch reads AGGTGSG.

The protein belongs to the tubulin family.

Its subcellular location is the cytoplasm. The protein localises to the cytoskeleton. It is found in the microtubule organizing center. It localises to the centrosome. In terms of biological role, tubulin is the major constituent of microtubules. The gamma chain is found at microtubule organizing centers (MTOC) such as the spindle poles or the centrosome, suggesting that it is involved in the minus-end nucleation of microtubule assembly. The protein is Tubulin gamma chain (G-TUB) of Plasmodium falciparum (isolate NF54).